Consider the following 429-residue polypeptide: Oxysterol-binding protein-like protein OBPalpha (429 aa).

Belongs to the OSBP family.

The chain is Oxysterol-binding protein-like protein OBPalpha (OBPALPHA) from Candida albicans (strain SC5314 / ATCC MYA-2876) (Yeast).